Consider the following 1865-residue polypeptide: Dedicator of cytokinesis protein 1 (1865 aa).

Positions 9–70 (REEKYGVAFY…PASYIHLKEA (62 aa)) constitute an SH3 domain. In terms of domain architecture, C2 DOCK-type spans 425–609 (RNDIYVTLVQ…DSFQISTLVC (185 aa)). The DOCKER domain maps to 1207 to 1617 (YKEIEREEMY…VEKQYGVRTM (411 aa)). Residues 1613–1723 (GVRTMPSGLD…FKPADSSLQQ (111 aa)) are disordered. Over residues 1639 to 1664 (PSSSRPLSVASVSSFSSDSTPSRPGS) the composition is skewed to low complexity. Positions 1680–1694 (RSQDKLDKDDPDKEK) are enriched in basic and acidic residues. At serine 1681 the chain carries Phosphoserine. The segment at 1687–1695 (KDDPDKEKK) is phosphoinositide-binding. Residues 1695 to 1704 (KDKKKEKRNS) are compositionally biased toward basic residues. Positions 1705–1716 (KHQEIFDKEFKP) are enriched in basic and acidic residues. Phosphoserine is present on residues serine 1743, serine 1756, serine 1761, and serine 1764. 2 disordered regions span residues 1753–1778 (RRFSVSPASPSSQQTPPPVTPRAKLS) and 1801–1865 (PLPL…GIVQ). Positions 1756–1766 (SVSPASPSSQQ) are enriched in low complexity. Phosphothreonine occurs at positions 1767 and 1772. Positions 1793–1819 (MDVADVPPPLPLKGNMADYGNLMENQD) are interaction with NCK2 second and third SH3 domain (minor). The SH3-binding; interaction with CRK motif lies at 1799–1805 (PPPLPLK). The segment at 1820-1836 (MMVSPTSPPPPPPQRQQ) is interaction with NCK2 third SH3 domain (major). Pro residues predominate over residues 1825 to 1851 (TSPPPPPPQRQQPPPLPSKTPPPPPPK). Residues 1837–1852 (PPPLPSKTPPPPPPKT) are interaction with NCK2 (minor). An SH3-binding; interaction with CRK motif is present at residues 1838–1843 (PPLPSK). Residue serine 1858 is modified to Phosphoserine.

This sequence belongs to the DOCK family. Interacts with the SH3 domains of CRK and NCK2 via multiple sites. Interacts with nucleotide-free RAC1 via its DOCKER domain. Interacts with ELMO1, ELMO2 and probably ELMO3 via its SH3 domain. Interacts with RAC1. Interacts with ELMO1 and ADGRB1. Identified in a complex with AUTS2 and ELMO2.

It is found in the cytoplasm. It localises to the membrane. In terms of biological role, involved in cytoskeletal rearrangements required for phagocytosis of apoptotic cells and cell motility. Along with DOCK1, mediates CRK/CRKL regulation of epithelial and endothelial cell spreading and migration on type IV collagen. Functions as a guanine nucleotide exchange factor (GEF), which activates Rac Rho small GTPases by exchanging bound GDP for free GTP. Its GEF activity may be enhanced by ELMO1. This Mus musculus (Mouse) protein is Dedicator of cytokinesis protein 1 (Dock1).